A 257-amino-acid chain; its full sequence is NAD-capped RNA hydrolase NudC (257 aa).

The substrate site is built by Lys-25 and Arg-69. Zn(2+) is bound by residues Cys-98 and Cys-101. Substrate is bound at residue Glu-111. Positions 116 and 119 each coordinate Zn(2+). Tyr-124 is a binding site for substrate. In terms of domain architecture, Nudix hydrolase spans Pro-125–Thr-248. The a divalent metal cation site is built by Ala-158, Glu-174, and Glu-178. A Nudix box motif is present at residues Gly-159–Gly-180. Gln-192–Ser-199 contributes to the substrate binding site. Glu-219 contacts a divalent metal cation. Substrate is bound at residue Ala-241.

The protein belongs to the Nudix hydrolase family. NudC subfamily. In terms of assembly, homodimer. Requires Mg(2+) as cofactor. The cofactor is Mn(2+). Zn(2+) is required as a cofactor.

The catalysed reaction is a 5'-end NAD(+)-phospho-ribonucleoside in mRNA + H2O = a 5'-end phospho-adenosine-phospho-ribonucleoside in mRNA + beta-nicotinamide D-ribonucleotide + 2 H(+). It carries out the reaction NAD(+) + H2O = beta-nicotinamide D-ribonucleotide + AMP + 2 H(+). The enzyme catalyses NADH + H2O = reduced beta-nicotinamide D-ribonucleotide + AMP + 2 H(+). Functionally, mRNA decapping enzyme that specifically removes the nicotinamide adenine dinucleotide (NAD) cap from a subset of mRNAs by hydrolyzing the diphosphate linkage to produce nicotinamide mononucleotide (NMN) and 5' monophosphate mRNA. The NAD-cap is present at the 5'-end of some mRNAs and stabilizes RNA against 5'-processing. Has preference for mRNAs with a 5'-end purine. Catalyzes the hydrolysis of a broad range of dinucleotide pyrophosphates. In Escherichia fergusonii (strain ATCC 35469 / DSM 13698 / CCUG 18766 / IAM 14443 / JCM 21226 / LMG 7866 / NBRC 102419 / NCTC 12128 / CDC 0568-73), this protein is NAD-capped RNA hydrolase NudC.